The sequence spans 295 residues: Secreted frizzled-related protein 2 (295 aa).

A signal peptide spans 1–24 (MPRGPASLLLLVLASHCCLGSARG). In terms of domain architecture, FZ spans 35-155 (YKRSNCKPIP…PQDNDLCIPL (121 aa)). Intrachain disulfides connect C40–C103, C50–C96, C87–C125, C114–C152, C118–C142, C172–C245, C175–C247, and C190–C295. Positions 172–295 (CEACKTKNED…ISRSIRKLQC (124 aa)) constitute an NTR domain.

The protein belongs to the secreted frizzled-related protein (sFRP) family. In terms of tissue distribution, highly expressed in the eye. Weaker expression in heart and lung.

The protein resides in the secreted. Functionally, soluble frizzled-related proteins (sFRPS) function as modulators of Wnt signaling through direct interaction with Wnts. They have a role in regulating cell growth and differentiation in specific cell types. SFRP2 may be important for eye retinal development and for myogenesis. The polypeptide is Secreted frizzled-related protein 2 (Mus musculus (Mouse)).